Reading from the N-terminus, the 284-residue chain is Serine/threonine-protein phosphatase Pgam5, mitochondrial (284 aa).

Residues 8 to 24 (LGVPTATLAVGTLLLGD) traverse the membrane as a helical segment.

This sequence belongs to the phosphoglycerate mutase family. BPG-dependent PGAM subfamily. In terms of assembly, interacts with skn-1 isoforms a and c.

It is found in the mitochondrion outer membrane. It carries out the reaction O-phospho-L-seryl-[protein] + H2O = L-seryl-[protein] + phosphate. The enzyme catalyses O-phospho-L-threonyl-[protein] + H2O = L-threonyl-[protein] + phosphate. In terms of biological role, displays phosphatase activity for serine/threonine residues. Has apparently no phosphoglycerate mutase activity. The polypeptide is Serine/threonine-protein phosphatase Pgam5, mitochondrial (pgam-5) (Caenorhabditis elegans).